The sequence spans 481 residues: Abietadienol/abietadienal oxidase (481 aa).

Residues Ala-2–Ile-22 form a helical membrane-spanning segment. Cys-430 lines the heme pocket.

It belongs to the cytochrome P450 family. Heme is required as a cofactor. In terms of tissue distribution, expressed in young tissues such as flushing buds and green bark tissues. Lower levels in mature needles and bark.

The protein resides in the membrane. It carries out the reaction abieta-7,13-dien-18-ol + 2 reduced [NADPH--hemoprotein reductase] + 2 O2 = abieta-7,13-dien-18-oate + 2 oxidized [NADPH--hemoprotein reductase] + 3 H2O + 3 H(+). Functionally, multifunctional and multisubstrate cytochrome P450 that oxidizes the respective carbon 18 of abietadienol, abietadienal, levopimaradienol, isopimara-7,15-dienol, isopimara-7,15-dienal, dehydroabietadienol, and dehydroabietadienal. The chain is Abietadienol/abietadienal oxidase (CYP720B1) from Pinus taeda (Loblolly pine).